The primary structure comprises 218 residues: Protein-L-isoaspartate O-methyltransferase (218 aa).

Residue Ser-66 is part of the active site.

The protein belongs to the methyltransferase superfamily. L-isoaspartyl/D-aspartyl protein methyltransferase family.

It localises to the cytoplasm. It carries out the reaction [protein]-L-isoaspartate + S-adenosyl-L-methionine = [protein]-L-isoaspartate alpha-methyl ester + S-adenosyl-L-homocysteine. In terms of biological role, catalyzes the methyl esterification of L-isoaspartyl residues in peptides and proteins that result from spontaneous decomposition of normal L-aspartyl and L-asparaginyl residues. It plays a role in the repair and/or degradation of damaged proteins. The protein is Protein-L-isoaspartate O-methyltransferase of Caulobacter sp. (strain K31).